The following is a 279-amino-acid chain: 3-methyl-2-oxobutanoate hydroxymethyltransferase (279 aa).

Mg(2+) contacts are provided by D53 and D92. Residues 53 to 54, D92, and K122 contribute to the 3-methyl-2-oxobutanoate site; that span reads DS. E124 is a Mg(2+) binding site. Catalysis depends on E191, which acts as the Proton acceptor.

The protein belongs to the PanB family. In terms of assembly, homodecamer; pentamer of dimers. Mg(2+) serves as cofactor.

The protein resides in the cytoplasm. The enzyme catalyses 3-methyl-2-oxobutanoate + (6R)-5,10-methylene-5,6,7,8-tetrahydrofolate + H2O = 2-dehydropantoate + (6S)-5,6,7,8-tetrahydrofolate. The protein operates within cofactor biosynthesis; (R)-pantothenate biosynthesis; (R)-pantoate from 3-methyl-2-oxobutanoate: step 1/2. Its function is as follows. Catalyzes the reversible reaction in which hydroxymethyl group from 5,10-methylenetetrahydrofolate is transferred onto alpha-ketoisovalerate to form ketopantoate. The protein is 3-methyl-2-oxobutanoate hydroxymethyltransferase of Maricaulis maris (strain MCS10) (Caulobacter maris).